A 337-amino-acid polypeptide reads, in one-letter code: Protein FAM169B (337 aa).

Positions 278-326 (STVHPKCSEEDTDTPGQASQEDGPTQFNHGESHKEWAVGEPERTQNGRR) are disordered. Residues 291 to 306 (TPGQASQEDGPTQFNH) show a composition bias toward polar residues. Basic and acidic residues predominate over residues 307–322 (GESHKEWAVGEPERTQ).

The protein belongs to the FAM169 family.

The polypeptide is Protein FAM169B (Fam169b) (Mus musculus (Mouse)).